The sequence spans 299 residues: Coenzyme PQQ synthesis protein B (299 aa).

Belongs to the PqqB family.

The protein operates within cofactor biosynthesis; pyrroloquinoline quinone biosynthesis. May be involved in the transport of PQQ or its precursor to the periplasm. This chain is Coenzyme PQQ synthesis protein B, found in Methylorubrum populi (strain ATCC BAA-705 / NCIMB 13946 / BJ001) (Methylobacterium populi).